The chain runs to 512 residues: Vacuolar protein sorting-associated protein 30 (512 aa).

Residues 294–511 form a BARA region; the sequence is TNIYNESFRI…LVFCSSKLSL (218 aa).

Belongs to the beclin family. Component of the autophagy-specific VPS34 PI3-kinase complex I composed of VPS15, VPS30, VPS34, ATG14 and ATG38; and of the VPS34 PI3-kinase complex II composed of VPS15, VPS30, VPS34 and VPS38.

It is found in the endosome membrane. The protein resides in the vacuole membrane. The protein localises to the preautophagosomal structure membrane. In terms of biological role, required for cytoplasm to vacuole transport (Cvt), autophagy, nucleophagy, and mitophagy, as a part of the autophagy-specific VPS34 PI3-kinase complex I. This complex is essential to recruit the ATG8-phosphatidylinositol conjugate and the ATG12-ATG5 conjugate to the pre-autophagosomal structure. Also involved in endosome-to-Golgi retrograde transport as part of the VPS34 PI3-kinase complex II. This second complex is required for the endosome-to-Golgi retrieval of PEP1 and KEX2, and the recruitment of VPS5 and VPS7, two components of the retromer complex, to endosomal membranes (probably through the synthesis of a specific pool of phosphatidylinositol 3-phosphate recruiting the retromer to the endosomes). Required for survival and/or proliferation in kidneys but not brain. The protein is Vacuolar protein sorting-associated protein 30 of Candida glabrata (strain ATCC 2001 / BCRC 20586 / JCM 3761 / NBRC 0622 / NRRL Y-65 / CBS 138) (Yeast).